We begin with the raw amino-acid sequence, 39 residues long: Photosystem II reaction center protein J (39 aa).

The helical transmembrane segment at 9–29 threads the bilayer; the sequence is LWLVVTFGGIVVLTVLGIFIY.

This sequence belongs to the PsbJ family. In terms of assembly, PSII is composed of 1 copy each of membrane proteins PsbA, PsbB, PsbC, PsbD, PsbE, PsbF, PsbH, PsbI, PsbJ, PsbK, PsbL, PsbM, PsbT, PsbY, PsbZ, Psb30/Ycf12, at least 3 peripheral proteins of the oxygen-evolving complex and a large number of cofactors. It forms dimeric complexes.

It localises to the plastid. Its subcellular location is the chloroplast thylakoid membrane. Functionally, one of the components of the core complex of photosystem II (PSII). PSII is a light-driven water:plastoquinone oxidoreductase that uses light energy to abstract electrons from H(2)O, generating O(2) and a proton gradient subsequently used for ATP formation. It consists of a core antenna complex that captures photons, and an electron transfer chain that converts photonic excitation into a charge separation. This chain is Photosystem II reaction center protein J, found in Cyanidium caldarium (Red alga).